The sequence spans 339 residues: Protoheme IX farnesyltransferase (339 aa).

A disordered region spans residues 1-27 (MTVADPRLTDAPAHSRTSLLGRRRGGR). 9 helical membrane-spanning segments follow: residues 45-65 (IVELLLITTIPVMLFAAGGLP), 67-87 (GWLILTTFVGGALAAGCANTL), 117-136 (ALVFATVLGIASTAIFVAFV), 140-159 (SAALALGAILLYVVGYTLLL), 165-185 (QNIVWGGVAGCMQVLIGWTAV), 191-211 (WAPFVLFGVIFLWTPPHYWPL), 236-256 (VSRQIVLYTIAMVLCSLLLVP), 257-277 (LGGAGVVYGAAALVLGIGFLV), and 309-329 (PMGVFHGSITYLTLLSAAVAV).

It belongs to the UbiA prenyltransferase family. Protoheme IX farnesyltransferase subfamily.

The protein resides in the cell membrane. The enzyme catalyses heme b + (2E,6E)-farnesyl diphosphate + H2O = Fe(II)-heme o + diphosphate. Its pathway is porphyrin-containing compound metabolism; heme O biosynthesis; heme O from protoheme: step 1/1. Functionally, converts heme B (protoheme IX) to heme O by substitution of the vinyl group on carbon 2 of heme B porphyrin ring with a hydroxyethyl farnesyl side group. In Kineococcus radiotolerans (strain ATCC BAA-149 / DSM 14245 / SRS30216), this protein is Protoheme IX farnesyltransferase.